The sequence spans 206 residues: uncharacterized protein (206 aa).

The segment at 128-206 (KRYNVQKPKV…DQSWLDELLR (79 aa)) is disordered. The span at 171 to 181 (YISSNHSSMHI) shows a compositional bias: polar residues.

It is found in the cytoplasm. Its subcellular location is the nucleus. This is an uncharacterized protein from Schizosaccharomyces pombe (strain 972 / ATCC 24843) (Fission yeast).